We begin with the raw amino-acid sequence, 670 residues long: ATP-dependent RNA helicase DDX18 (670 aa).

Composition is skewed to polar residues over residues Ser31–Asp42 and Val83–Ser105. The disordered stretch occupies residues Ser31–Gly169. The segment covering Met117–Pro154 has biased composition (basic and acidic residues). The Q motif signature appears at Phe179 to His207. Residues Ile210 to Tyr385 form the Helicase ATP-binding domain. Residue Ala223–Thr230 coordinates ATP. Residues Asp333–Asp336 carry the DEAD box motif. The Helicase C-terminal domain occupies Gly399–Ile569.

The protein belongs to the DEAD box helicase family. DDX18/HAS1 subfamily. As to quaternary structure, interacts with NOL8; the interaction is RNA-dependent. Interacts with PRC2 complex components EZH2, SUZ2 and JARID2; these interactions prevent deposition of the repressive H3K27me3 mark onto rDNA in pluripotent cells.

It is found in the nucleus. It localises to the nucleolus. The protein localises to the chromosome. It carries out the reaction ATP + H2O = ADP + phosphate + H(+). Functionally, ATP-dependent RNA helicase that plays a role in the regulation of R-loop homeostasis in both endogenous R-loop-prone regions and at sites of DNA damage. At endogenous loci such as actively transcribed genes, may act as a helicase to resolve the formation of R-loop during transcription and prevent the interference of R-loop with DNA-replication machinery. Also participates in the removal of DNA-lesion-associated R-loop. Plays an essential role for establishing pluripotency during embryogenesis and for pluripotency maintenance in embryonic stem cells. Mechanistically, prevents the polycomb repressive complex 2 (PRC2) from accessing rDNA loci and protects the active chromatin status in nucleolus. The protein is ATP-dependent RNA helicase DDX18 (DDX18) of Homo sapiens (Human).